The following is a 307-amino-acid chain: Nicotinamide/nicotinic acid mononucleotide adenylyltransferase 2 (307 aa).

NAD(+) contacts are provided by Ser16 and Phe17. His24 provides a ligand contact to ATP. The NAD(+) site is built by Trp92 and Thr95. 2 S-palmitoyl cysteine lipidation sites follow: Cys164 and Cys165. The NAD(+) site is built by Gly200, Asp202, Leu212, Trp213, and Arg232. ATP is bound at residue 271 to 274 (TKSR).

This sequence belongs to the eukaryotic NMN adenylyltransferase family. Monomer. The cofactor is Mg(2+). Post-translationally, degraded in response to injured neurite. Degradation is caused by polyubiquitination by MYCBP2 after recognition by FBXO45. Palmitoylated; palmitoylation is required for membrane association.

It localises to the golgi apparatus membrane. Its subcellular location is the cytoplasmic vesicle membrane. The protein localises to the cytoplasm. The protein resides in the cell projection. It is found in the axon. The catalysed reaction is beta-nicotinamide D-ribonucleotide + ATP + H(+) = diphosphate + NAD(+). The enzyme catalyses nicotinate beta-D-ribonucleotide + ATP + H(+) = deamido-NAD(+) + diphosphate. Its pathway is cofactor biosynthesis; NAD(+) biosynthesis; NAD(+) from nicotinamide D-ribonucleotide: step 1/1. It participates in cofactor biosynthesis; NAD(+) biosynthesis; deamido-NAD(+) from nicotinate D-ribonucleotide: step 1/1. With respect to regulation, inhibited by P1-(adenosine-5')-P3-(nicotinamide-riboside-5')-triphosphate (Np3AD) and P1-(adenosine-5')-P4-(nicotinamide-riboside-5')-tetraphosphate (Np4AD). Its function is as follows. Nicotinamide/nicotinate-nucleotide adenylyltransferase that acts as an axon maintenance factor. Axon survival factor required for the maintenance of healthy axons: acts by delaying Wallerian axon degeneration, an evolutionarily conserved process that drives the loss of damaged axons. Catalyzes the formation of NAD(+) from nicotinamide mononucleotide (NMN) and ATP. Can also use the deamidated form; nicotinic acid mononucleotide (NaMN) as substrate but with a lower efficiency. Cannot use triazofurin monophosphate (TrMP) as substrate. Also catalyzes the reverse reaction, i.e. the pyrophosphorolytic cleavage of NAD(+). For the pyrophosphorolytic activity prefers NAD(+), NADH and NaAD as substrates and degrades nicotinic acid adenine dinucleotide phosphate (NHD) less effectively. Fails to cleave phosphorylated dinucleotides NADP(+), NADPH and NaADP(+). Also acts as an activator of ADP-ribosylation by supporting the catalytic activity of PARP16 and promoting mono-ADP-ribosylation of ribosomes by PARP16. May be involved in the maintenance of axonal integrity. The chain is Nicotinamide/nicotinic acid mononucleotide adenylyltransferase 2 (Nmnat2) from Rattus norvegicus (Rat).